A 419-amino-acid chain; its full sequence is MTTQLEQAWELAKQRFAAVGVDVEEALRQLDRLPVSMHCWQGDDVAGFENTGAALTGGIQATGNYPGKARNATELRADLELALSLIPGPKRLNLHAIYHEAPEPVGRNEIKPEHFKNWVEWAKANKLGLDFNPSCFSHPLSADGFTLSHADDEIRQFWIDHVKASRRVSAYFGEQLGTPSVMNIWIPDGMKDITVDRLAPRQRLLAALDEIISEKINPAHHIDAVESKLFGIGAESYTVGSNEFYMGYATSRQTALCLDAGHFHPTEVISDKISAAMLYVPRLLLHVSRPVRWDSDHVVLLDDETQAIASEIIRHDLFDRVHIGLDFFDASINRIAAWVIGTRNMKKALLRALLEPTAALKQLEENGDYTARLALLEEQKSLPWQAIWEMYCQRNDAPAGSQWLDNVRAYEKEVLSQRG.

Mn(2+) is bound by residues His262, Asp294, and Asp296.

It belongs to the rhamnose isomerase family. In terms of assembly, homotetramer. It depends on Mn(2+) as a cofactor.

Its subcellular location is the cytoplasm. It catalyses the reaction L-rhamnopyranose = L-rhamnulose. It participates in carbohydrate degradation; L-rhamnose degradation; glycerone phosphate from L-rhamnose: step 1/3. In terms of biological role, catalyzes the interconversion of L-rhamnose and L-rhamnulose. The chain is L-rhamnose isomerase from Enterobacter sp. (strain 638).